Consider the following 118-residue polypeptide: Large ribosomal subunit protein bL20 (118 aa).

This sequence belongs to the bacterial ribosomal protein bL20 family.

Its function is as follows. Binds directly to 23S ribosomal RNA and is necessary for the in vitro assembly process of the 50S ribosomal subunit. It is not involved in the protein synthesizing functions of that subunit. In Stutzerimonas stutzeri (strain A1501) (Pseudomonas stutzeri), this protein is Large ribosomal subunit protein bL20.